Here is a 511-residue protein sequence, read N- to C-terminus: Histidine ammonia-lyase (511 aa).

Residues 143-145 (ASG) constitute a cross-link (5-imidazolinone (Ala-Gly)). A 2,3-didehydroalanine (Ser) modification is found at S144.

The protein belongs to the PAL/histidase family. Post-translationally, contains an active site 4-methylidene-imidazol-5-one (MIO), which is formed autocatalytically by cyclization and dehydration of residues Ala-Ser-Gly.

It localises to the cytoplasm. The catalysed reaction is L-histidine = trans-urocanate + NH4(+). Its pathway is amino-acid degradation; L-histidine degradation into L-glutamate; N-formimidoyl-L-glutamate from L-histidine: step 1/3. This chain is Histidine ammonia-lyase, found in Vibrio cholerae serotype O1 (strain ATCC 39315 / El Tor Inaba N16961).